Here is a 240-residue protein sequence, read N- to C-terminus: Octanoyltransferase (240 aa).

One can recognise a BPL/LPL catalytic domain in the interval 49–233 (GEAPELVWLL…AFESVFGATR (185 aa)). Substrate is bound by residues 87–94 (RGGQVTYH), 162–164 (AIG), and 175–177 (GIA). Cys-193 serves as the catalytic Acyl-thioester intermediate.

This sequence belongs to the LipB family.

It is found in the cytoplasm. It carries out the reaction octanoyl-[ACP] + L-lysyl-[protein] = N(6)-octanoyl-L-lysyl-[protein] + holo-[ACP] + H(+). It participates in protein modification; protein lipoylation via endogenous pathway; protein N(6)-(lipoyl)lysine from octanoyl-[acyl-carrier-protein]: step 1/2. Catalyzes the transfer of endogenously produced octanoic acid from octanoyl-acyl-carrier-protein onto the lipoyl domains of lipoate-dependent enzymes. Lipoyl-ACP can also act as a substrate although octanoyl-ACP is likely to be the physiological substrate. The chain is Octanoyltransferase from Bradyrhizobium sp. (strain BTAi1 / ATCC BAA-1182).